The primary structure comprises 154 residues: Small ribosomal subunit protein uS15 (154 aa).

Over residues 1–10 the composition is skewed to basic residues; the sequence is MARMHSRRRG. The segment at 1 to 32 is disordered; the sequence is MARMHSRRRGSSGSDRPTADEPPEWSEVDEDA. The span at 21-32 shows a compositional bias: acidic residues; it reads EPPEWSEVDEDA.

It belongs to the universal ribosomal protein uS15 family. In terms of assembly, part of the 30S ribosomal subunit.

This chain is Small ribosomal subunit protein uS15, found in Natronomonas pharaonis (strain ATCC 35678 / DSM 2160 / CIP 103997 / JCM 8858 / NBRC 14720 / NCIMB 2260 / Gabara) (Halobacterium pharaonis).